The following is a 300-amino-acid chain: Porphobilinogen deaminase (300 aa).

S-(dipyrrolylmethanemethyl)cysteine is present on C239.

The protein belongs to the HMBS family. As to quaternary structure, monomer. Requires dipyrromethane as cofactor.

It catalyses the reaction 4 porphobilinogen + H2O = hydroxymethylbilane + 4 NH4(+). Its pathway is porphyrin-containing compound metabolism; protoporphyrin-IX biosynthesis; coproporphyrinogen-III from 5-aminolevulinate: step 2/4. Functionally, tetrapolymerization of the monopyrrole PBG into the hydroxymethylbilane pre-uroporphyrinogen in several discrete steps. This Francisella tularensis subsp. tularensis (strain FSC 198) protein is Porphobilinogen deaminase.